Here is a 154-residue protein sequence, read N- to C-terminus: Ribonuclease H (154 aa).

An RNase H type-1 domain is found at 1 to 142 (MQKQIEIFTD…CDELAKKGAE (142 aa)). Residues Asp-10, Glu-48, Asp-70, and Asp-134 each contribute to the Mg(2+) site.

This sequence belongs to the RNase H family. As to quaternary structure, monomer. Mg(2+) is required as a cofactor.

Its subcellular location is the cytoplasm. The catalysed reaction is Endonucleolytic cleavage to 5'-phosphomonoester.. Its function is as follows. Endonuclease that specifically degrades the RNA of RNA-DNA hybrids. The polypeptide is Ribonuclease H (Haemophilus influenzae (strain 86-028NP)).